Reading from the N-terminus, the 1075-residue chain is mRNA-binding protein PUF2 (1075 aa).

A disordered region spans residues 38–68 (NTNARSVRVSDKRGRSSSTSPQKIGSYRTRA). Ser-72 carries the post-translational modification Phosphoserine. Positions 93 to 105 (TPVVVVPPTSSTP) are enriched in low complexity. The segment at 93 to 112 (TPVVVVPPTSSTPDSLNSTT) is disordered. Ser-198 carries the post-translational modification Phosphoserine. Residues 316-402 (NTISISNVFP…APSTVSFARV (87 aa)) enclose the RRM domain. Positions 511–872 (ELNHLLQNAL…QLLEEVGLSS (362 aa)) constitute a PUM-HD domain. Pumilio repeat units lie at residues 574 to 611 (AIVMLDQLPELSSDYLGNTVIQKLFENSSNIIRDIMLR), 612 to 647 (KCNKYLTSMGVHKNGTWVCQKIIKMANTPRQINLVT), 649 to 683 (GVSDYCTPLFNDQFGNYVIQGILKFGFPWNSFIFE), 684 to 719 (SVLSHFWTIVQNRYGSRAVRACLEADSIITQCQLLT), 722 to 758 (SLIIVLSPYLATDTNGTLLITWLLDTCTLPNKNLILC), and 760 to 800 (KLVN…KIIH). Residues Ser-872 and Ser-876 each carry the phosphoserine modification. Disordered stretches follow at residues 874-931 (GISP…LNFN) and 997-1075 (NNYN…SYGY). Low complexity-rich tracts occupy residues 901-916 (VSVSSVRSSNSRHNSV), 997-1009 (NNYNNSGYSSQMN), and 1018-1063 (NNNN…NNNN).

Its subcellular location is the cytoplasm. Its function is as follows. RNA-binding protein involved in post-transcriptional regulation. Negatively regulates expression of COX17 by binding to the 3'-UTR of COX17 mRNA. Promotes decay of COX17 mRNA by enhancing its rate of deadenylation and subsequent turnover. Predominantly binds to mRNAs encoding membrane-associated proteins with roles in transmembrane transport and vesicular trafficking. This Saccharomyces cerevisiae (strain ATCC 204508 / S288c) (Baker's yeast) protein is mRNA-binding protein PUF2 (PUF2).